A 141-amino-acid polypeptide reads, in one-letter code: Hemoglobin subunit alpha-D (141 aa).

Residues 1–141 (MLTADDKKLI…VAAVLAEKYR (141 aa)) form the Globin domain. His58 and His87 together coordinate heme b.

The protein belongs to the globin family. In terms of assembly, heterotetramer of two alpha-D chains and two beta chains. In terms of tissue distribution, red blood cells.

Functionally, involved in oxygen transport from the lung to the various peripheral tissues. This is Hemoglobin subunit alpha-D (HBAD) from Aegypius monachus (Cinereous vulture).